A 334-amino-acid polypeptide reads, in one-letter code: Type II methyltransferase M.NlaIII (334 aa).

This sequence belongs to the N(4)/N(6)-methyltransferase family.

It carries out the reaction a 2'-deoxyadenosine in DNA + S-adenosyl-L-methionine = an N(6)-methyl-2'-deoxyadenosine in DNA + S-adenosyl-L-homocysteine + H(+). Its function is as follows. A methylase, recognizes the double-stranded sequence 5'-CATG-3', methylates A-2 on both strands and protects the DNA from cleavage by the NlaIII endonuclease. The sequence is that of Type II methyltransferase M.NlaIII (nlaIIIM) from Neisseria lactamica.